The chain runs to 659 residues: MAAVILESIFLKRSQQKKKTSPLNFKKRLFLLTVHKLSYYEYDFERGRRGSKKGSIDVEKITCVETVVPEKNPPPERQIPRRGEESSEMEQISIIERFPYPFQVVYDEGPLYVFSPTEELRKRWIHQLKNVIRYNSDLVQKYHPCFWIDGQYLCCSQTAKNAMGCQILENRNGSLKPGSSHRKTKKPLPPTPEEDQILKKPLPPEPAAAPVSTSELKKVVALYDYMPMNANDLQLRKGDEYFILEESNLPWWRARDKNGQEGYIPSNYVTEAEDSIEMYEWYSKHMTRSQAEQLLKQEGKEGGFIVRDSSKAGKYTVSVFAKSTGDPQGVIRHYVVCSTPQSQYYLAEKHLFSTIPELINYHQHNSAGLISRLKYPVSQQNKNAPSTAGLGYGSWEIDPKDLTFLKELGTGQFGVVKYGKWRGQYDVAIKMIKEGSMSEDEFIEEAKVMMNLSHEKLVQLYGVCTKQRPIFIITEYMANGCLLNYLREMRHRFQTQQLLEMCKDVCEAMEYLESKQFLHRDLAARNCLVNDQGVVKVSDFGLSRYVLDDEYTSSVGSKFPVRWSPPEVLMYSKFSSKSDIWAFGVLMWEIYSLGKMPYERFTNSETAEHIAQGLRLYRPHLASEKVYTIMYSCWHEKADERPTFKILLSNILDVMDEES.

Position 2 is an N-acetylalanine (A2). The 131-residue stretch at 3 to 133 (AVILESIFLK…WIHQLKNVIR (131 aa)) folds into the PH domain. The interval 12–24 (KRSQQKKKTSPLN) is inositol-(1,3,4,5)-tetrakisphosphate 1-binding. At S21 the chain carries Phosphoserine. K26, R28, and Y39 together coordinate 1D-myo-inositol 1,3,4,5-tetrakisphosphate. Position 40 is a phosphotyrosine (Y40). K53 provides a ligand contact to 1D-myo-inositol 1,3,4,5-tetrakisphosphate. Phosphoserine is present on residues S55 and S115. A Btk-type zinc finger spans residues 135–171 (NSDLVQKYHPCFWIDGQYLCCSQTAKNAMGCQILENR). Positions 143, 154, 155, and 165 each coordinate Zn(2+). The tract at residues 171-210 (RNGSLKPGSSHRKTKKPLPPTPEEDQILKKPLPPEPAAAP) is disordered. S180 is modified (phosphoserine; by PKC/PRKCB). T191 is subject to Phosphothreonine. The 61-residue stretch at 214–274 (SELKKVVALY…PSNYVTEAED (61 aa)) folds into the SH3 domain. Y223 carries the post-translational modification Phosphotyrosine; by autocatalysis. An SH2 domain is found at 281–377 (WYSKHMTRSQ…GLISRLKYPV (97 aa)). Phosphotyrosine is present on residues Y344 and Y361. One can recognise a Protein kinase domain in the interval 402–655 (LTFLKELGTG…ILLSNILDVM (254 aa)). ATP-binding positions include 408–416 (LGTGQFGVV) and K430. 474–477 (TEYM) contacts clofedanol. Position 474–477 (474–477 (TEYM)) interacts with dasatinib. D521 serves as the catalytic Proton acceptor. L542 contacts clofedanol. The residue at position 551 (Y551) is a Phosphotyrosine; by LYN and SYK. Positions 581 to 588 (WAFGVLMW) match the CAV1-binding motif. Residue S604 is modified to Phosphoserine. Phosphotyrosine is present on Y617. Residues S623 and S659 each carry the phosphoserine modification.

The protein belongs to the protein kinase superfamily. Tyr protein kinase family. TEC subfamily. In terms of assembly, part of a complex composed of EEIG1, TNFRSF11A/RANK, PLCG2, GAB2, TEC and BTK; complex formation increases in the presence of TNFSF11/RANKL. Binds GTF2I through the PH domain. Interacts with SH3BP5 via the SH3 domain. Interacts with IBTK via its PH domain. Interacts with ARID3A, CAV1, FASLG, PIN1, TLR8 and TLR9. Interacts with MPL/TPOR. The cofactor is Zn(2+). Post-translationally, following B-cell receptor (BCR) engagement, translocates to the plasma membrane where it gets phosphorylated at Tyr-551 by LYN and SYK. Phosphorylation at Tyr-551 is followed by autophosphorylation of Tyr-223 which may create a docking site for a SH2 containing protein. Phosphorylation at Ser-180 by PRKCB, leads in translocation of BTK back to the cytoplasmic fraction. Phosphorylation at Ser-21 and Ser-115 creates a binding site for PIN1 at these Ser-Pro motifs, and promotes it's recruitment. As to expression, predominantly expressed in B-lymphocytes.

It is found in the cytoplasm. It localises to the cell membrane. The protein localises to the nucleus. The protein resides in the membrane raft. It carries out the reaction L-tyrosyl-[protein] + ATP = O-phospho-L-tyrosyl-[protein] + ADP + H(+). Its activity is regulated as follows. Activated by phosphorylation. In primary B lymphocytes, is almost always non-phosphorylated and is thus catalytically inactive. Stimulation of TLR8 and TLR9 causes BTK activation. As a negative feedback mechanism to fine-tune BCR signaling, activated PRKCB down-modulates BTK function via direct phosphorylation of BTK at Ser-180, resulting in translocation of BTK back to the cytoplasmic fraction. PIN1, SH3BP5, and IBTK were also identified as BTK activity inhibitors. Interaction with CAV1 leads to dramatic down-regulation of the kinase activity of BTK. LFM-13A is a specific inhibitor of BTK. Dasatinib, a cancer drug acting as a tyrosine kinase inhibitor, also blocks BTK activity. In terms of biological role, non-receptor tyrosine kinase indispensable for B lymphocyte development, differentiation and signaling. Binding of antigen to the B-cell antigen receptor (BCR) triggers signaling that ultimately leads to B-cell activation. After BCR engagement and activation at the plasma membrane, phosphorylates PLCG2 at several sites, igniting the downstream signaling pathway through calcium mobilization, followed by activation of the protein kinase C (PKC) family members. PLCG2 phosphorylation is performed in close cooperation with the adapter protein B-cell linker protein BLNK. BTK acts as a platform to bring together a diverse array of signaling proteins and is implicated in cytokine receptor signaling pathways. Plays an important role in the function of immune cells of innate as well as adaptive immunity, as a component of the Toll-like receptors (TLR) pathway. The TLR pathway acts as a primary surveillance system for the detection of pathogens and are crucial to the activation of host defense. Especially, is a critical molecule in regulating TLR9 activation in splenic B-cells. Within the TLR pathway, induces tyrosine phosphorylation of TIRAP which leads to TIRAP degradation. BTK also plays a critical role in transcription regulation. Induces the activity of NF-kappa-B, which is involved in regulating the expression of hundreds of genes. BTK is involved on the signaling pathway linking TLR8 and TLR9 to NF-kappa-B. Acts as an activator of NLRP3 inflammasome assembly by mediating phosphorylation of NLRP3. Transiently phosphorylates transcription factor GTF2I on tyrosine residues in response to BCR. GTF2I then translocates to the nucleus to bind regulatory enhancer elements to modulate gene expression. ARID3A and NFAT are other transcriptional target of BTK. BTK is required for the formation of functional ARID3A DNA-binding complexes. There is however no evidence that BTK itself binds directly to DNA. BTK has a dual role in the regulation of apoptosis. Plays a role in STING1-mediated induction of type I interferon (IFN) response by phosphorylating DDX41. This is Tyrosine-protein kinase BTK (BTK) from Homo sapiens (Human).